Reading from the N-terminus, the 122-residue chain is uncharacterized protein (122 aa).

A run of 2 helical transmembrane segments spans residues 43–63 and 76–96; these read PIII…IFFI and AVAD…ILYF.

Its subcellular location is the membrane. This is an uncharacterized protein from Schizosaccharomyces pombe (strain 972 / ATCC 24843) (Fission yeast).